Consider the following 360-residue polypeptide: UDP-N-acetylglucosamine--N-acetylmuramyl-(pentapeptide) pyrophosphoryl-undecaprenol N-acetylglucosamine transferase (360 aa).

UDP-N-acetyl-alpha-D-glucosamine contacts are provided by serine 198 and glutamine 289.

This sequence belongs to the glycosyltransferase 28 family. MurG subfamily.

Its subcellular location is the cell membrane. It catalyses the reaction Mur2Ac(oyl-L-Ala-gamma-D-Glu-L-Lys-D-Ala-D-Ala)-di-trans,octa-cis-undecaprenyl diphosphate + UDP-N-acetyl-alpha-D-glucosamine = beta-D-GlcNAc-(1-&gt;4)-Mur2Ac(oyl-L-Ala-gamma-D-Glu-L-Lys-D-Ala-D-Ala)-di-trans,octa-cis-undecaprenyl diphosphate + UDP + H(+). It participates in cell wall biogenesis; peptidoglycan biosynthesis. Its function is as follows. Cell wall formation. Catalyzes the transfer of a GlcNAc subunit on undecaprenyl-pyrophosphoryl-MurNAc-pentapeptide (lipid intermediate I) to form undecaprenyl-pyrophosphoryl-MurNAc-(pentapeptide)GlcNAc (lipid intermediate II). The protein is UDP-N-acetylglucosamine--N-acetylmuramyl-(pentapeptide) pyrophosphoryl-undecaprenol N-acetylglucosamine transferase of Streptococcus pyogenes serotype M49 (strain NZ131).